The chain runs to 222 residues: V-type ATP synthase subunit D (222 aa).

It belongs to the V-ATPase D subunit family.

Its function is as follows. Produces ATP from ADP in the presence of a proton gradient across the membrane. The chain is V-type ATP synthase subunit D from Clostridioides difficile (strain 630) (Peptoclostridium difficile).